Consider the following 301-residue polypeptide: Beta carbonic anhydrase 5, chloroplastic (301 aa).

The N-terminal 56 residues, 1–56, are a transit peptide targeting the chloroplast; the sequence is MAATPTHFSVSHDPFSSTSLLNLQTQAIFGPNHSLKTTQLRIPASFRRKATNLQVM. Thr65 carries the phosphothreonine modification. Ser128 carries the post-translational modification Phosphoserine. The residue at position 231 (Cys231) is an S-nitrosocysteine.

The protein belongs to the beta-class carbonic anhydrase family. As to expression, strongly expressed in aerial tissues including leaves, stems, flowers and siliques.

The protein resides in the plastid. It is found in the chloroplast. The catalysed reaction is hydrogencarbonate + H(+) = CO2 + H2O. Its function is as follows. Reversible hydration of carbon dioxide. The sequence is that of Beta carbonic anhydrase 5, chloroplastic (BCA5) from Arabidopsis thaliana (Mouse-ear cress).